The primary structure comprises 546 residues: Probable bifunctional SAT/APS kinase (546 aa).

The sulfate adenylyltransferase stretch occupies residues 1–370 (MEKIKYLKSI…LAETYVPKHK (370 aa)). Residues 371–546 (QGFCVWLTGL…FLKKEGFIKD (176 aa)) form an adenylsulfate kinase region. 379–386 (GLPCAGKS) is a binding site for ATP. Catalysis depends on S453, which acts as the Phosphoserine intermediate.

This sequence in the N-terminal section; belongs to the sulfate adenylyltransferase family. The protein in the C-terminal section; belongs to the APS kinase family.

It catalyses the reaction sulfate + ATP + H(+) = adenosine 5'-phosphosulfate + diphosphate. The enzyme catalyses adenosine 5'-phosphosulfate + ATP = 3'-phosphoadenylyl sulfate + ADP + H(+). It functions in the pathway sulfur metabolism; hydrogen sulfide biosynthesis; sulfite from sulfate: step 1/3. Its pathway is sulfur metabolism; hydrogen sulfide biosynthesis; sulfite from sulfate: step 2/3. The chain is Probable bifunctional SAT/APS kinase (sat/cysC) from Aquifex aeolicus (strain VF5).